The primary structure comprises 448 residues: Protein W (448 aa).

2 disordered regions span residues Lys26–Asp104 and Phe193–Ala406. Polar residues-rich tracts occupy residues Tyr28–Ser37 and Asp77–Arg96. Positions Ser240–Asp252 are enriched in acidic residues. Ser257 is modified (phosphoserine; by host). Basic and acidic residues predominate over residues Phe296–Lys317. Position 350 is a phosphoserine; by host (Ser350).

In Hendra virus (isolate Horse/Autralia/Hendra/1994), this protein is Protein W (P/V/C).